Here is a 341-residue protein sequence, read N- to C-terminus: RNA 3'-terminal phosphate cyclase (341 aa).

Residues glutamine 102 and 283–287 (HLADQ) contribute to the ATP site. The active-site Tele-AMP-histidine intermediate is histidine 308.

The protein belongs to the RNA 3'-terminal cyclase family. Type 1 subfamily.

It localises to the cytoplasm. It carries out the reaction a 3'-end 3'-phospho-ribonucleotide-RNA + ATP = a 3'-end 2',3'-cyclophospho-ribonucleotide-RNA + AMP + diphosphate. Catalyzes the conversion of 3'-phosphate to a 2',3'-cyclic phosphodiester at the end of RNA. The mechanism of action of the enzyme occurs in 3 steps: (A) adenylation of the enzyme by ATP; (B) transfer of adenylate to an RNA-N3'P to produce RNA-N3'PP5'A; (C) and attack of the adjacent 2'-hydroxyl on the 3'-phosphorus in the diester linkage to produce the cyclic end product. The biological role of this enzyme is unknown but it is likely to function in some aspects of cellular RNA processing. The protein is RNA 3'-terminal phosphate cyclase of Pseudomonas aeruginosa (strain UCBPP-PA14).